The primary structure comprises 123 residues: UPF0102 protein VSAL_I2655 (123 aa).

The protein belongs to the UPF0102 family.

The sequence is that of UPF0102 protein VSAL_I2655 from Aliivibrio salmonicida (strain LFI1238) (Vibrio salmonicida (strain LFI1238)).